Reading from the N-terminus, the 583-residue chain is Proline--tRNA ligase (583 aa).

It belongs to the class-II aminoacyl-tRNA synthetase family. ProS type 1 subfamily. As to quaternary structure, homodimer.

The protein resides in the cytoplasm. The enzyme catalyses tRNA(Pro) + L-proline + ATP = L-prolyl-tRNA(Pro) + AMP + diphosphate. Functionally, catalyzes the attachment of proline to tRNA(Pro) in a two-step reaction: proline is first activated by ATP to form Pro-AMP and then transferred to the acceptor end of tRNA(Pro). As ProRS can inadvertently accommodate and process non-cognate amino acids such as alanine and cysteine, to avoid such errors it has two additional distinct editing activities against alanine. One activity is designated as 'pretransfer' editing and involves the tRNA(Pro)-independent hydrolysis of activated Ala-AMP. The other activity is designated 'posttransfer' editing and involves deacylation of mischarged Ala-tRNA(Pro). The misacylated Cys-tRNA(Pro) is not edited by ProRS. The polypeptide is Proline--tRNA ligase (Acidothermus cellulolyticus (strain ATCC 43068 / DSM 8971 / 11B)).